A 1697-amino-acid chain; its full sequence is Neurexin-3a (1697 aa).

The first 23 residues, 1–23 (MNFFRFPVQLQLLISTVLGPCLG), serve as a signal peptide directing secretion. The 175-residue stretch at 24-198 (LEFTGLQGQW…RVRMDIEGIC (175 aa)) folds into the Laminin G-like 1 domain. Residues 24-1622 (LEFTGLQGQW…EVVRESSSTT (1599 aa)) are Extracellular-facing. The EGF-like 1 domain occupies 194 to 231 (IEGICMENPCENGGTCSVVDGEPLCDCSKTEYVGRFCN). 3 disulfides stabilise this stretch: Cys198-Cys209, Cys203-Cys218, and Cys220-Cys230. 2 Laminin G-like domains span residues 258–455 (VATF…VFKC) and 462–654 (DPIS…KPSC). Ca(2+) is bound by residues Asp304, Leu321, and Met389. 5 disulfide bridges follow: Cys419–Cys455, Cys625–Cys654, Cys662–Cys673, Cys667–Cys682, and Cys684–Cys694. Positions 658–695 (SGKQCDSYPCKNKGLCKEGWNRFICDCTGTGYWSRTCE) constitute an EGF-like 2 domain. Laminin G-like domains are found at residues 700–872 (ILSY…IDFC) and 886–1061 (DPVT…ERGC). Cystine bridges form between Cys1033–Cys1061, Cys1077–Cys1088, Cys1082–Cys1097, and Cys1099–Cys1109. The region spanning 1073 to 1110 (PSTTCQEDSCANMGICIQQWENYTCDCSMTSYTGTHCN) is the EGF-like 3 domain. Positions 1114 to 1314 (TTYIFGKGGG…NPNIKINGSV (201 aa)) constitute a Laminin G-like 6 domain. Disordered stretches follow at residues 1345–1366 (TMST…TDDM), 1442–1479 (LSDG…NLPP), and 1520–1557 (PNKV…KMNH). Residues 1446 to 1461 (GSDDCGDDDDDDDDDG) show a composition bias toward acidic residues. Residues 1527-1547 (GRTTTASFSPKLSRSTTTSTP) are compositionally biased toward polar residues. Residues 1623–1643 (GMVVGIVAAAALCILILLYAM) traverse the membrane as a helical segment. The Cytoplasmic segment spans residues 1644-1697 (YKYRNRDEGSYQVDETRNYITNSAQSNGAVMKDKQQSTKSGNKKQKNKDKEYYV). Positions 1665-1697 (NSAQSNGAVMKDKQQSTKSGNKKQKNKDKEYYV) are disordered.

The protein belongs to the neurexin family.

Its subcellular location is the membrane. Functionally, neuronal cell surface protein that may be involved in cell recognition and cell adhesion. The protein is Neurexin-3a (nrxn3a) of Danio rerio (Zebrafish).